Consider the following 336-residue polypeptide: Ferrochelatase (336 aa).

Residues histidine 206 and glutamate 287 each coordinate Fe cation.

This sequence belongs to the ferrochelatase family.

It is found in the cytoplasm. It catalyses the reaction heme b + 2 H(+) = protoporphyrin IX + Fe(2+). The protein operates within porphyrin-containing compound metabolism; protoheme biosynthesis; protoheme from protoporphyrin-IX: step 1/1. Functionally, catalyzes the ferrous insertion into protoporphyrin IX. This chain is Ferrochelatase, found in Neisseria gonorrhoeae (strain ATCC 700825 / FA 1090).